The following is a 321-amino-acid chain: Probable protein phosphatase methylesterase 1 (321 aa).

Active-site residues include Ser-170, Asp-195, and His-307.

This sequence belongs to the AB hydrolase superfamily.

The enzyme catalyses [phosphatase 2A protein]-C-terminal L-leucine methyl ester + H2O = [phosphatase 2A protein]-C-terminal L-leucine + methanol + H(+). Functionally, demethylates proteins that have been reversibly carboxymethylated. The sequence is that of Probable protein phosphatase methylesterase 1 (ppme1) from Dictyostelium discoideum (Social amoeba).